The sequence spans 368 residues: Ribosomal RNA large subunit methyltransferase M (368 aa).

S-adenosyl-L-methionine is bound by residues serine 199, 232 to 235 (APGG), aspartate 251, aspartate 271, and aspartate 287. Residue lysine 316 is the Proton acceptor of the active site.

Belongs to the class I-like SAM-binding methyltransferase superfamily. RNA methyltransferase RlmE family. RlmM subfamily. As to quaternary structure, monomer.

Its subcellular location is the cytoplasm. It carries out the reaction cytidine(2498) in 23S rRNA + S-adenosyl-L-methionine = 2'-O-methylcytidine(2498) in 23S rRNA + S-adenosyl-L-homocysteine + H(+). Its function is as follows. Catalyzes the 2'-O-methylation at nucleotide C2498 in 23S rRNA. This Aromatoleum aromaticum (strain DSM 19018 / LMG 30748 / EbN1) (Azoarcus sp. (strain EbN1)) protein is Ribosomal RNA large subunit methyltransferase M.